Here is a 3646-residue protein sequence, read N- to C-terminus: Platelet adherence protein A (3646 aa).

The N-terminal stretch at 1 to 33 (MKDFLKKVLILFTVLLMSMPSSVLNLGTSVVRA) is a signal peptide. The tract at residues 34–359 (DDPLNIETRR…KNVSFYVNEQ (326 aa)) is does not bind platelets. An F2, binds platelets, fibronectin, vitronectin, salivary pellicle, causes ADP secretion by dense granules region spans residues 34 to 690 (DDPLNIETRR…NQDAHAKTKD (657 aa)). Residues 34-1328 (DDPLNIETRR…KFVLSDTLEE (1295 aa)) are binds platelets. A VWFA domain is found at 75 to 373 (DLVILQDASG…VFSQKILESV (299 aa)). The Integrin-like recognition motif NGR motif lies at 214–216 (NGR). The Integrin-like recognition motif RGT motif lies at 416–418 (RGT). Residues 439-466 (KNSFDYDLSKEARAPETDEDSEVDPPEN) form a disordered region. The segment covering 445–454 (DLSKEARAPE) has biased composition (basic and acidic residues). The Integrin-like recognition motif AGD signature appears at 485-487 (AGD). The segment at 709 to 3205 (TEVDKKVNEK…TVPNKATIAF (2497 aa)) is central region with RrgB repeats. Composition is skewed to basic and acidic residues over residues 1124 to 1135 (KDKNDHKGEKET) and 1563 to 1573 (DHNPKFHKDSN). Disordered regions lie at residues 1124–1153 (KDKNDHKGEKETIPVTVTPPTEPNVSKKIN), 1563–1589 (DHNPKFHKDSNEVPVTPPSPEQPPIEK), 2011–2036 (FNNDPGTEQSSKPVPVIPPTPTEPEL), 2170–2198 (EKDSNIVPVTPPSPENPPVEKKVNNKPSA), 2320–2343 (KTEKSTEPVPVIPPSPEEPGIKKE), 2467–2492 (PNRPEIHKDSNRVPVTPPTPEEPEIK), 2611–2644 (ASYRVDFPNNPGVTKDSNEVPVTPPSPENPPIEK), 2767–2792 (FNNDPGTEQSSKPVPVIPPTPTEPEL), 2916–2948 (PNKPAVTKDSNEVPVTPPSPEQPPIEKDVNSKP), 3202–3252 (TIAF…NPST), 3371–3412 (AAAK…AALE), and 3550–3618 (NDKP…PKTG). Over residues 2011-2022 (FNNDPGTEQSSK) the composition is skewed to polar residues. Residues 2767 to 2778 (FNNDPGTEQSSK) show a composition bias toward polar residues. Residues 3210-3220 (GKNGTKESNPV) show a composition bias toward polar residues. A compositionally biased stretch (basic and acidic residues) spans 3223–3237 (RPRDPEKPEEPKPNE). Coiled coils occupy residues 3326-3376 (IAKI…AKEK) and 3408-3475 (VAAL…VNDK). Residues 3371–3406 (AAAKEKAAAAPATPAPASDSDAGNATATPAPADNNA) are compositionally biased toward low complexity. The span at 3550 to 3560 (NDKPKVTNTVN) shows a compositional bias: polar residues. Pro residues predominate over residues 3563–3605 (PPEPTTPPQTPPHTPPTTPGTPPPTTPDTPPAPKGDLPPAPTP). Positions 3614-3618 (LPKTG) match the LPXTG sorting signal motif. At Thr-3617 the chain carries Pentaglycyl murein peptidoglycan amidated threonine. Residues 3618–3646 (GTSATMVNEVIIGMILVLMGLLLRRKPKH) constitute a propeptide, removed by sortase.

The protein localises to the secreted. The protein resides in the cell wall. With respect to regulation, whole bacterial adhesion to Chinese hamster ovary cells expressing GPIIbIIIa is abrogated by integrin inhibitor RGDS and GPIIbIIIa inhibitor Abciximab. In terms of biological role, a cell wall protein involved with Hsa in host cell interactions required for colonization and pathogenesis. Involved in recognition of platelets. Interacts with human platelet integrin receptor GPIIbIIIa (a complex of ITGA2B and ITGB3). Involved in platelet spreading, presumably by activation of outside-in signaling leading to platelet activation and then spreading. Spreading also involves GPIIbIIIa. Binding to platelets under static conditions causes platelet dense granules to secrete ADP (similar to release induced by fibrinogen binding), has no effect on platelet alpha granule release. The N-terminal 656 aa residue fragment (called F2) also binds platelets, causes dense granule secretion and allows platelet spreading. Acts in concert with Hsa to promote binding to human fibronectin (FN1) and vitronectin (VTN), and biofilm formation. F2 bind activated platelets more strongly than unactivated platelets. Binding to both FN1 and VTN is mediated at least in part by their glycosylation. This is Platelet adherence protein A from Streptococcus gordonii (strain Challis / ATCC 35105 / BCRC 15272 / CH1 / DL1 / V288).